The chain runs to 126 residues: Small ribosomal subunit protein uS13 (126 aa).

The segment at 93–126 (RRGLPVRGQRTKTNARTRKGPKRTVAGKKKAGRK) is disordered.

This sequence belongs to the universal ribosomal protein uS13 family. As to quaternary structure, part of the 30S ribosomal subunit. Forms a loose heterodimer with protein S19. Forms two bridges to the 50S subunit in the 70S ribosome.

In terms of biological role, located at the top of the head of the 30S subunit, it contacts several helices of the 16S rRNA. In the 70S ribosome it contacts the 23S rRNA (bridge B1a) and protein L5 of the 50S subunit (bridge B1b), connecting the 2 subunits; these bridges are implicated in subunit movement. Contacts the tRNAs in the A and P-sites. This chain is Small ribosomal subunit protein uS13, found in Beutenbergia cavernae (strain ATCC BAA-8 / DSM 12333 / CCUG 43141 / JCM 11478 / NBRC 16432 / NCIMB 13614 / HKI 0122).